The sequence spans 218 residues: Adenylate kinase (218 aa).

10 to 15 (GAGKGT) contributes to the ATP binding site. The interval 30–59 (STGDIFREAIAKGTELGRKVQDIVNSGNLV) is NMP. AMP contacts are provided by residues T31, R36, 57 to 59 (NLV), 85 to 88 (GYPR), and Q92. The segment at 126–163 (TRRVCSKCGKVYNVITLPSKVEGICDDCGGTLIQRDDD) is LID. ATP is bound at residue R127. Positions 130 and 133 each coordinate Zn(2+). 136 to 137 (VY) provides a ligand contact to ATP. Residues C150 and C153 each coordinate Zn(2+). Positions 160 and 171 each coordinate AMP. K199 lines the ATP pocket.

The protein belongs to the adenylate kinase family. In terms of assembly, monomer.

It localises to the cytoplasm. The enzyme catalyses AMP + ATP = 2 ADP. Its pathway is purine metabolism; AMP biosynthesis via salvage pathway; AMP from ADP: step 1/1. Catalyzes the reversible transfer of the terminal phosphate group between ATP and AMP. Plays an important role in cellular energy homeostasis and in adenine nucleotide metabolism. The sequence is that of Adenylate kinase from Fervidobacterium nodosum (strain ATCC 35602 / DSM 5306 / Rt17-B1).